Consider the following 320-residue polypeptide: Meso-diaminopimelate D-dehydrogenase (320 aa).

NADP(+) contacts are provided by residues 11–14, 35–37, 65–68, 88–90, and 117–121; these read YGNL, SRR, CMGS, TYD, and TGWDP. Residues D90, D120, W144, 150-151, T169, R195, H244, and N270 contribute to the substrate site; that span reads QG.

Homodimer.

It catalyses the reaction meso-2,6-diaminopimelate + NADP(+) + H2O = (S)-2-amino-6-oxoheptanedioate + NH4(+) + NADPH + H(+). It participates in amino-acid biosynthesis; L-lysine biosynthesis via DAP pathway; DL-2,6-diaminopimelate from (S)-tetrahydrodipicolinate: step 1/1. L,L-2,6-diaminopimelate and D,D-2,6-diaminopimelate competitively inhibit the oxidative deamination of meso-2,6-diaminopimelate. The enzyme is also inhibited by L-cysteine, and by p-chloromercuribenzoate, iodoacetic acid and HgCl(2) in vitro. In terms of biological role, catalyzes the reversible NADPH-dependent reductive amination of L-2-amino-6-oxopimelate, the acyclic form of L-tetrahydrodipicolinate, to generate the meso compound, D,L-2,6-diaminopimelate. Probably plays a role in lysine biosynthesis. Exhibits a high substrate specificity for meso-2,6-diaminopimelate, since L,L-2,6-diaminopimelate, D,D-2,6-diaminopimelate, L-glutamate, L-alanine, L-leucine, L-valine, L-aspartate, L-threonine, L-homoserine, L-methionine, L-lysine, L-serine, L-phenylalanine, L-tyrosine, L-tryptophan, L-ornithine, L-histidine, L-arginine, D-glutamate, and D-alanine are not substrates for the oxidative deamination reaction. Can use NAD(+) only poorly since the activity observed in the presence of NAD(+) is about 3% of that with NADP(+). In Corynebacterium glutamicum (strain ATCC 13032 / DSM 20300 / JCM 1318 / BCRC 11384 / CCUG 27702 / LMG 3730 / NBRC 12168 / NCIMB 10025 / NRRL B-2784 / 534), this protein is Meso-diaminopimelate D-dehydrogenase (ddh).